The chain runs to 107 residues: Integration host factor subunit beta (107 aa).

The interval 78–107 (PHFKPGKELRERVDGRAGEPLKADEPDDER) is disordered. Over residues 82–101 (PGKELRERVDGRAGEPLKAD) the composition is skewed to basic and acidic residues.

This sequence belongs to the bacterial histone-like protein family. In terms of assembly, heterodimer of an alpha and a beta chain.

In terms of biological role, this protein is one of the two subunits of integration host factor, a specific DNA-binding protein that functions in genetic recombination as well as in transcriptional and translational control. This chain is Integration host factor subunit beta, found in Burkholderia multivorans (strain ATCC 17616 / 249).